A 518-amino-acid chain; its full sequence is Calcium and calcium/calmodulin-dependent serine/threonine-protein kinase (518 aa).

One can recognise a Protein kinase domain in the interval 13–300 (YEISEILGRG…AQELLSHPWV (288 aa)). Residues 19 to 27 (LGRGGFSVV) and lysine 44 each bind ATP. The Proton acceptor role is filled by aspartate 165. Threonine 265 bears the Phosphothreonine mark. Residues 323-336 (ARRKLRAAAIASVW) are calmodulin-binding. Positions 344–365 (TKKLRSLVGTYDLKEEEIESLR) form a coiled coil. 3 consecutive EF-hand domains span residues 394-429 (SLIP…LKNS), 430-465 (KGDD…LPEE), and 472-507 (TEPG…DSSL). The Ca(2+) site is built by aspartate 407, asparagine 409, aspartate 411, threonine 413, glutamate 418, aspartate 443, aspartate 445, serine 447, cysteine 449, glutamate 454, aspartate 485, asparagine 487, aspartate 489, lysine 491, and glutamate 496.

The protein belongs to the protein kinase superfamily. CAMK Ser/Thr protein kinase family. CaMK subfamily. In terms of assembly, interacts with IPD3. Interacts with CIP73. Autophosphorylation stimulated by calcium. Occurs probably by an intermolecular mechanism. Mainly expressed in roots and nodules. Detected in leaves, stems and cotyledons.

Its subcellular location is the nucleus. It carries out the reaction L-seryl-[protein] + ATP = O-phospho-L-seryl-[protein] + ADP + H(+). The enzyme catalyses L-threonyl-[protein] + ATP = O-phospho-L-threonyl-[protein] + ADP + H(+). With respect to regulation, activated by calcium/calmodulin binding after calcium-induced autophosphorylation. Its function is as follows. Calcium- and calmodulin-dependent protein kinase necessary and sufficient for dedifferentiation of root cortical cells into nodule initials. Not required for calcium spiking. Acts as central regulator of the nodule organogenesis program. Required for root hair curling and infection thread (IT) formation upon rhizobial infection, and arbuscule formation during arbuscular mycorrhiza (AM) fungal infection. Phosphorylates the downstream target IPD3, a protein required for root infection by symbiotic rhizobia and AM fungi. Phosphorylates the downstream target CIP73, a protein required for root nodule organogenesis. Mediates the phosphorylation of leghemoglobins (e.g. LB1) to modulate their oxygen O(2) affinity, thus regulating the diffusion of oxygen to the bacteroids in nodules. The polypeptide is Calcium and calcium/calmodulin-dependent serine/threonine-protein kinase (Lotus japonicus (Lotus corniculatus var. japonicus)).